The chain runs to 372 residues: Lipoyl synthase (372 aa).

Residues cysteine 37, cysteine 42, cysteine 48, cysteine 63, cysteine 67, cysteine 70, and serine 292 each contribute to the [4Fe-4S] cluster site. The Radical SAM core domain occupies 49-281 (WREGTATVML…ERAALEMGFL (233 aa)). The segment at 338–372 (LTAELDPDEPRPPVAPAPASASPARLVPAASLIRR) is disordered. Low complexity predominate over residues 354-372 (APASASPARLVPAASLIRR).

The protein belongs to the radical SAM superfamily. Lipoyl synthase family. [4Fe-4S] cluster serves as cofactor.

The protein resides in the cytoplasm. It catalyses the reaction [[Fe-S] cluster scaffold protein carrying a second [4Fe-4S](2+) cluster] + N(6)-octanoyl-L-lysyl-[protein] + 2 oxidized [2Fe-2S]-[ferredoxin] + 2 S-adenosyl-L-methionine + 4 H(+) = [[Fe-S] cluster scaffold protein] + N(6)-[(R)-dihydrolipoyl]-L-lysyl-[protein] + 4 Fe(3+) + 2 hydrogen sulfide + 2 5'-deoxyadenosine + 2 L-methionine + 2 reduced [2Fe-2S]-[ferredoxin]. It participates in protein modification; protein lipoylation via endogenous pathway; protein N(6)-(lipoyl)lysine from octanoyl-[acyl-carrier-protein]: step 2/2. In terms of biological role, catalyzes the radical-mediated insertion of two sulfur atoms into the C-6 and C-8 positions of the octanoyl moiety bound to the lipoyl domains of lipoate-dependent enzymes, thereby converting the octanoylated domains into lipoylated derivatives. The sequence is that of Lipoyl synthase from Sorangium cellulosum (strain So ce56) (Polyangium cellulosum (strain So ce56)).